The chain runs to 161 residues: Nuclear transcription factor Y subunit B-3 (161 aa).

A disordered region spans residues 1 to 23 (MADSDNDSGGHKDGGNASTREQD). Alanine 2 carries the N-acetylalanine modification. The span at 8–23 (SGGHKDGGNASTREQD) shows a compositional bias: basic and acidic residues. The DNA-binding element occupies 26–32 (LPIANVS). The interval 53 to 64 (VQECVSEFISFI) is subunit association domain (SAD). The tract at residues 114 to 146 (EKTTTAGRQGDKEGGGGGGGAGSGSGGAPMYGG) is disordered. The span at 128–146 (GGGGGGAGSGSGGAPMYGG) shows a compositional bias: gly residues.

The protein belongs to the NFYB/HAP3 subunit family. As to quaternary structure, heterotrimeric transcription factor composed of three components, NF-YA, NF-YB and NF-YC. NF-YB and NF-YC must interact and dimerize for NF-YA association and DNA binding. Component of a heat stress-inducible transcriptional complex with NF-YA and NF-YB subunits made, at least, of NFYA2, NFYB3 and DPB3-1 in cooperation with DREB2A. Binds directly with DPB3-1. In terms of tissue distribution, ubiquitous. Expressed in seedlings, petioles, hypocotyls, reproductive organ tissues and leaves.

The protein localises to the nucleus. Its subcellular location is the cytoplasm. It localises to the cytosol. In terms of biological role, component of the NF-Y/HAP transcription factor complex. The NF-Y complex stimulates the transcription of various genes by recognizing and binding to a CCAAT motif in promoters. Promotes the expression of heat stress-inducible genes by contributing to the formation of a heat stress-specific transcriptional complex with NF-Y subunits (e.g. DPB3-1, NF-YA2 and NF-YB3) and DREB2A at the promoter of target genes, thus promoting heat tolerance. In Arabidopsis thaliana (Mouse-ear cress), this protein is Nuclear transcription factor Y subunit B-3.